Here is a 161-residue protein sequence, read N- to C-terminus: Low molecular weight phosphotyrosine protein phosphatase (161 aa).

C14 (nucleophile) is an active-site residue. Catalysis depends on R20, which acts as the Transition state stabilizer. S57 is subject to Phosphoserine. The active-site Proton donor is the D133.

Belongs to the low molecular weight phosphotyrosine protein phosphatase family.

It is found in the cytoplasm. It catalyses the reaction O-phospho-L-tyrosyl-[protein] + H2O = L-tyrosyl-[protein] + phosphate. The enzyme catalyses a phosphate monoester + H2O = an alcohol + phosphate. Functionally, acts on tyrosine phosphorylated proteins, low-MW aryl phosphates and natural and synthetic acyl phosphates. This is Low molecular weight phosphotyrosine protein phosphatase from Saccharomyces cerevisiae (strain ATCC 204508 / S288c) (Baker's yeast).